The following is a 600-amino-acid chain: Probable methyltransferase PMT7 (600 aa).

Over 1 to 15 (MGGGYVLFGSARSGQ) the chain is Cytoplasmic. Residues 16–36 (MIMVALVLMVGSFYAGSIFGN) form a helical; Signal-anchor for type II membrane protein membrane-spanning segment. Over 37 to 600 (NSPIYISQPS…FCRKKFWAIL (564 aa)) the chain is Lumenal. N49, N98, N110, N157, N200, N204, N334, N447, and N484 each carry an N-linked (GlcNAc...) asparagine glycan.

The protein belongs to the methyltransferase superfamily.

It localises to the golgi apparatus membrane. This chain is Probable methyltransferase PMT7, found in Arabidopsis thaliana (Mouse-ear cress).